A 297-amino-acid chain; its full sequence is Probable esterase afoC (297 aa).

The active-site Charge relay system is the S136. A compositionally biased stretch (low complexity) spans 204–217 (ASSSASASVSGSES). Residues 204-226 (ASSSASASVSGSESAGEEEEDGH) are disordered. Catalysis depends on charge relay system residues D240 and H267.

The protein belongs to the LovG family.

Its function is as follows. Probable esterase; part of the gene cluster that mediates the biosynthesis of asperfuranone, a probable antitumor agent. The polyketide synthase afoG is responsible for producing the 3,5-dimethyloctadienone moiety from acetyl-CoA, three malonyl-CoA, and two S-adenosyl methionines (SAM). The 3,5-dimethyloctadienone moiety is then loaded onto the SAT domain of afoE and extended with four malonyl-CoA and one SAM, which leads to the formation of 2,4-dihydroxy-6-(5,7-dimethyl-2-oxo-trans-3-trans-5-nonadienyl)-3-methylbenzaldehyde (compound 2) after reductive release and aldol condensation. AfoD is the next enzyme in the biosynthesis sequence and hydroxylates the side chain at the benzylic position of compound 2. After benzylic hydroxylation, a furan ring is formed after five-member ring hemiacetal formation and water elimination. AfoF and afoC are proposed to oxidize the R-diketone proton and to reduce the unconjugated carbonyl group, respectively, to generate asperfuranone. Since no intermediates could be isolated from afoF and afoC deletants, the sequence of these two enzymes is not fully understood. Moreover, since afoC deletant still produces a small amount of asperfuranone, other endogenous oxidoreductases might catalyze the same reaction with much less efficiency. The sequence is that of Probable esterase afoC from Emericella nidulans (strain FGSC A4 / ATCC 38163 / CBS 112.46 / NRRL 194 / M139) (Aspergillus nidulans).